A 73-amino-acid polypeptide reads, in one-letter code: Sec-independent protein translocase protein TatA (73 aa).

The chain crosses the membrane as a helical span at residues 1–21; it reads MFGLGAPELILILILALIIFG. Residues 52–73 form a disordered region; the sequence is EAAKIDDGNNNSDKEKATRQAS.

The protein belongs to the TatA/E family. In terms of assembly, forms a complex with TatC.

It localises to the cell membrane. Its function is as follows. Part of the twin-arginine translocation (Tat) system that transports large folded proteins containing a characteristic twin-arginine motif in their signal peptide across membranes. TatA could form the protein-conducting channel of the Tat system. In Moorella thermoacetica (strain ATCC 39073 / JCM 9320), this protein is Sec-independent protein translocase protein TatA.